The primary structure comprises 153 residues: Transcriptional repressor NrdR (153 aa).

Residues 3–34 (CPYCGHPDTRVVDSRPSDEGMAIRRRRECPSC) fold into a zinc finger. The ATP-cone domain occupies 49 to 136 (LMVVKRDGRK…VYREFDSVER (88 aa)).

This sequence belongs to the NrdR family. Zn(2+) serves as cofactor.

Functionally, negatively regulates transcription of bacterial ribonucleotide reductase nrd genes and operons by binding to NrdR-boxes. This Thermus thermophilus (strain ATCC BAA-163 / DSM 7039 / HB27) protein is Transcriptional repressor NrdR.